The sequence spans 95 residues: MHLTANVLLVPNALKKRDVKYIYNTYLKNYSVIEGVMCCNGDCLAVVVLDRNQLQNTDMEVLESLEYTSDNIELLCEKICVIVDNYDKYYQKNCV.

This is an uncharacterized protein from Autographa californica nuclear polyhedrosis virus (AcMNPV).